We begin with the raw amino-acid sequence, 211 residues long: Molybdenum cofactor guanylyltransferase (211 aa).

GTP is bound by residues 12 to 14 (LAG), lysine 25, asparagine 53, aspartate 71, and aspartate 101. Aspartate 101 provides a ligand contact to Mg(2+).

It belongs to the MobA family. In terms of assembly, monomer. It depends on Mg(2+) as a cofactor.

It is found in the cytoplasm. It carries out the reaction Mo-molybdopterin + GTP + H(+) = Mo-molybdopterin guanine dinucleotide + diphosphate. Its function is as follows. Transfers a GMP moiety from GTP to Mo-molybdopterin (Mo-MPT) cofactor (Moco or molybdenum cofactor) to form Mo-molybdopterin guanine dinucleotide (Mo-MGD) cofactor. This Acidovorax ebreus (strain TPSY) (Diaphorobacter sp. (strain TPSY)) protein is Molybdenum cofactor guanylyltransferase.